A 509-amino-acid polypeptide reads, in one-letter code: FAD-linked oxidoreductase anuG (509 aa).

The first 21 residues, 1-21 (MVQISNVWGFGLAIMASLAAA), serve as a signal peptide directing secretion. An FAD-binding PCMH-type domain is found at 75–246 (YAAPKFTVVV…TSFEMSIYPT (172 aa)).

Belongs to the oxygen-dependent FAD-linked oxidoreductase family. Requires FAD as cofactor.

It carries out the reaction (2S,9S)-annullatin H + 2 A = (2S,9S)-annullatin D + 2 AH2. The protein operates within secondary metabolite biosynthesis. In terms of biological role, cytochrome P450 monooxygenase; part of the gene cluster that mediates the biosynthesis of annullatin D, an alkylated aromatic polyketide with a fused dihydrobenzofuran lactone ring system that exhibits potent agonistic activities toward the cannabinoid receptors. Within the pathway, anuG is responsible for the five-member lactone ring formation in (2S, 9S)-annullatin D via oxidative lactonization between the two hydroxyl groups. The annullatin backbone 2-hydroxymethyl-3-pentylphenol is assembled from one acetyl-CoA starter unit and 5 malonyl-CoA elongation units by cooperation of the highly reducing polyketide synthase anuA, the short-chain dehydrogenase anuB and the oxidoreductase anuC, before being hydroxylated at the C-5 alkyl chain by the cytochrome P450 monooxygenase anuE to form (8S)-annullatin E. The prenyltransferase anuH subsequently installs one isoprenyl group at the benzene ring to form (8S)-annullatin J. Enzymatic or nonenzymatic dihydro-benzofuran ring formation between the prenyl and the phenolic hydroxyl groups in (8S)-annullatin J results in two diastereomers (2S,9S)-annullatin H and compound 12. The intermediate (2S,9S)-annullatin H is then converted to (2S,9S)-annullatin D by the FAD-linked oxidoreductase anuG-catalyzed five-member lactone ring formation. The isomer 12 acts as a substrate for the short-chain dehydrogenase anuF and is oxidized to (2R)-annullatin F, which is subsequently acetylated by an acetyltransferase leading to (2R)-annullatin G formation. The remaining enzymes identified within the cluster, anuD, anuI and anuJ, seem not to be involved in annullatin biosynthesis. This Penicillium roqueforti (strain FM164) protein is FAD-linked oxidoreductase anuG.